Consider the following 382-residue polypeptide: Heme A synthase (382 aa).

The next 7 helical transmembrane spans lie at 37-57, 126-146, 152-172, 188-208, 231-251, 288-308, and 332-352; these read IRVW…VGGL, VIGV…QVPA, LLFL…MVAS, LATH…YIME, STGL…VAGI, LVQF…VVVW, and LQIV…IAIF. His-293 contacts heme. His-353 is a binding site for heme. A helical transmembrane segment spans residues 356–376; it reads LAVIVWVLILRARFLSGYPIA.

It belongs to the COX15/CtaA family. Type 2 subfamily. In terms of assembly, interacts with CtaB. Requires heme b as cofactor.

It is found in the cell membrane. The catalysed reaction is Fe(II)-heme o + 2 A + H2O = Fe(II)-heme a + 2 AH2. It functions in the pathway porphyrin-containing compound metabolism; heme A biosynthesis; heme A from heme O: step 1/1. Its function is as follows. Catalyzes the conversion of heme O to heme A by two successive hydroxylations of the methyl group at C8. The first hydroxylation forms heme I, the second hydroxylation results in an unstable dihydroxymethyl group, which spontaneously dehydrates, resulting in the formyl group of heme A. The protein is Heme A synthase of Roseobacter denitrificans (strain ATCC 33942 / OCh 114) (Erythrobacter sp. (strain OCh 114)).